Reading from the N-terminus, the 62-residue chain is Chromatin protein Cren7 2 (62 aa).

The protein belongs to the Cren7 family. As to quaternary structure, monomer. In terms of processing, methylated at multiple sites, to varying extents.

It localises to the chromosome. The protein localises to the cytoplasm. In terms of biological role, a chromatin protein, binds double-stranded DNA without sequence specificity. Constrains negative DNA supercoils. This Hyperthermus butylicus (strain DSM 5456 / JCM 9403 / PLM1-5) protein is Chromatin protein Cren7 2 (cren7-2).